Here is a 519-residue protein sequence, read N- to C-terminus: Protein nucleotidyltransferase YdiU (519 aa).

The ATP site is built by Gly100, Gly102, Arg103, Lys123, Asp135, Gly136, Arg193, and Arg200. Asp270 serves as the catalytic Proton acceptor. Residues Asn271 and Asp280 each contribute to the Mg(2+) site. Asp280 is a binding site for ATP.

Belongs to the SELO family. Mg(2+) serves as cofactor. It depends on Mn(2+) as a cofactor.

It carries out the reaction L-seryl-[protein] + ATP = 3-O-(5'-adenylyl)-L-seryl-[protein] + diphosphate. It catalyses the reaction L-threonyl-[protein] + ATP = 3-O-(5'-adenylyl)-L-threonyl-[protein] + diphosphate. The catalysed reaction is L-tyrosyl-[protein] + ATP = O-(5'-adenylyl)-L-tyrosyl-[protein] + diphosphate. The enzyme catalyses L-histidyl-[protein] + UTP = N(tele)-(5'-uridylyl)-L-histidyl-[protein] + diphosphate. It carries out the reaction L-seryl-[protein] + UTP = O-(5'-uridylyl)-L-seryl-[protein] + diphosphate. It catalyses the reaction L-tyrosyl-[protein] + UTP = O-(5'-uridylyl)-L-tyrosyl-[protein] + diphosphate. In terms of biological role, nucleotidyltransferase involved in the post-translational modification of proteins. It can catalyze the addition of adenosine monophosphate (AMP) or uridine monophosphate (UMP) to a protein, resulting in modifications known as AMPylation and UMPylation. This Xylella fastidiosa (strain Temecula1 / ATCC 700964) protein is Protein nucleotidyltransferase YdiU.